The chain runs to 142 residues: MPTPSMEDYIEQIYLLIDEKGYARVSDIAEALSVHPSSVTKMVQKLDKDEYLIYEKYRGLVLTTKGKKIGERLVYRHDLLEQFMRIIGVDEGKIYNDVEGIEHHLSWEAIDRIGDLVEYFEQDAVRVETLRGVQRANEEKSN.

Residues 1–63 (MPTPSMEDYI…YEKYRGLVLT (63 aa)) enclose the HTH dtxR-type domain. Mn(2+) is bound by residues D8, E11, H77, E99, E102, and H103.

The protein belongs to the DtxR/MntR family. Homodimer.

It localises to the cytoplasm. DNA binding is strongly activated by Mn(2+). Its function is as follows. Central regulator of manganese homeostasis. The sequence is that of HTH-type transcriptional regulator MntR from Bacillus cereus (strain G9842).